The following is a 102-amino-acid chain: uncharacterized protein (102 aa).

3 helical membrane passes run 14–34 (IKNW…VISA), 35–55 (VAFT…LILI), and 76–96 (ILSI…HCYI).

The protein resides in the cell membrane. This is an uncharacterized protein from Methanocaldococcus jannaschii (strain ATCC 43067 / DSM 2661 / JAL-1 / JCM 10045 / NBRC 100440) (Methanococcus jannaschii).